Reading from the N-terminus, the 351-residue chain is MEIKEHIINLPKHIYTGYGILDNFRNYLQTLNLPQPFLVITGPVIHQEIFSKRIEEHIKDFKYEVVIVNKSDLSEAEKVEDIARQKGIKTILGVGGGTVIDIAKFTAYKIDREFISIPTSPSHDGITSPFAAIKGLGKPISIKAKEPLAIISDVEILASAPRRLINAGIGDTLGKITAVRDWRLAHKLRGEYYGDYTASLALMSARHALSCTKIINKDIRAGVRVLTEALISSGVAMGMAGSTRPASGSEHLFAHAIELLYPNLGLHGELVALGTIMMAYIHGINWRRIRRAMKKIGLPVTSKQIGIPDEGIIKALTIAHSIRPERYTILGDRGLTWESAEKIARETGVIS.

Residues 97–101 (GTVID) and 119–122 (TSPS) contribute to the NAD(+) site. Residue Asp-124 participates in substrate binding. Ser-128 serves as a coordination point for NAD(+). Position 171 (Asp-171) interacts with substrate. The Zn(2+) site is built by Asp-171 and His-251. His-255 is a binding site for substrate. His-267 contributes to the Zn(2+) binding site.

It belongs to the glycerol-1-phosphate dehydrogenase family. As to quaternary structure, homodimer. Zn(2+) serves as cofactor.

It localises to the cytoplasm. The enzyme catalyses sn-glycerol 1-phosphate + NAD(+) = dihydroxyacetone phosphate + NADH + H(+). It catalyses the reaction sn-glycerol 1-phosphate + NADP(+) = dihydroxyacetone phosphate + NADPH + H(+). The protein operates within membrane lipid metabolism; glycerophospholipid metabolism. Functionally, catalyzes the NAD(P)H-dependent reduction of dihydroxyacetonephosphate (DHAP or glycerone phosphate) to glycerol 1-phosphate (G1P). The G1P thus generated is used as the glycerophosphate backbone of phospholipids in the cellular membranes of Archaea. This Sulfolobus acidocaldarius (strain ATCC 33909 / DSM 639 / JCM 8929 / NBRC 15157 / NCIMB 11770) protein is Glycerol-1-phosphate dehydrogenase [NAD(P)+].